The sequence spans 331 residues: Heme A synthase (331 aa).

8 helical membrane passes run 6-26 (VAIW…IGGF), 87-107 (YVHR…FIYF), 124-144 (ALLF…SGLV), 154-174 (LALH…QFFD), 193-213 (IWII…VAGL), 251-271 (VQFI…ILTI), 279-299 (LYVM…TLLL), and 301-321 (IPMA…GSGL). His-255 provides a ligand contact to heme. His-309 is a binding site for heme.

This sequence belongs to the COX15/CtaA family. Type 2 subfamily. In terms of assembly, interacts with CtaB. Heme b serves as cofactor.

It is found in the cell membrane. It carries out the reaction Fe(II)-heme o + 2 A + H2O = Fe(II)-heme a + 2 AH2. It participates in porphyrin-containing compound metabolism; heme A biosynthesis; heme A from heme O: step 1/1. Functionally, catalyzes the conversion of heme O to heme A by two successive hydroxylations of the methyl group at C8. The first hydroxylation forms heme I, the second hydroxylation results in an unstable dihydroxymethyl group, which spontaneously dehydrates, resulting in the formyl group of heme A. The chain is Heme A synthase from Wolbachia pipientis subsp. Culex pipiens (strain wPip).